We begin with the raw amino-acid sequence, 471 residues long: Secretogranin-3 (471 aa).

The signal sequence occupies residues Met1–Ala22. Disordered regions lie at residues Pro24 to Ser73, Lys92 to Asp145, Ala208 to Glu231, and Lys345 to Lys405. Residues Gly28 to Leu45 are compositionally biased toward basic and acidic residues. Ser40 bears the Phosphoserine mark. Ser40 is a glycosylation site (O-linked (Xyl...) (chondroitin sulfate) serine). Residues Pro62–Ser73 show a composition bias toward low complexity. Basic and acidic residues-rich tracts occupy residues Leu106 to His142, Ala214 to Glu231, Lys345 to Ser355, and Glu363 to Lys405. Phosphoserine is present on Ser365.

As to quaternary structure, interacts with CHGA. Interacts with secretogranin II/SCG2. Interacts (via C-terminus) with CPE. As to expression, expression restricted to the brain and pituitary gland. Not detected in the adrenal gland.

It is found in the cytoplasmic vesicle. The protein resides in the secretory vesicle. The protein localises to the secretory vesicle membrane. Its subcellular location is the secreted. Functionally, member of the granin protein family that regulates the biogenesis of secretory granules. Acts as a sorting receptor for intragranular proteins including chromogranin A/CHGA. May also play a role in angiogenesis. Promotes endothelial proliferation, migration and tube formation through MEK/ERK signaling pathway. The chain is Secretogranin-3 (Scg3) from Rattus norvegicus (Rat).